Here is a 273-residue protein sequence, read N- to C-terminus: Ribosomal RNA small subunit methyltransferase A (273 aa).

Positions 25, 27, 52, 73, 99, and 118 each coordinate S-adenosyl-L-methionine.

It belongs to the class I-like SAM-binding methyltransferase superfamily. rRNA adenine N(6)-methyltransferase family. RsmA subfamily.

It localises to the cytoplasm. It catalyses the reaction adenosine(1518)/adenosine(1519) in 16S rRNA + 4 S-adenosyl-L-methionine = N(6)-dimethyladenosine(1518)/N(6)-dimethyladenosine(1519) in 16S rRNA + 4 S-adenosyl-L-homocysteine + 4 H(+). Its function is as follows. Specifically dimethylates two adjacent adenosines (A1518 and A1519) in the loop of a conserved hairpin near the 3'-end of 16S rRNA in the 30S particle. May play a critical role in biogenesis of 30S subunits. The polypeptide is Ribosomal RNA small subunit methyltransferase A (Novosphingobium aromaticivorans (strain ATCC 700278 / DSM 12444 / CCUG 56034 / CIP 105152 / NBRC 16084 / F199)).